A 36-amino-acid polypeptide reads, in one-letter code: Pancreatic polypeptide (36 aa).

A Phenylalanine amide modification is found at Phe36.

Belongs to the NPY family.

Its subcellular location is the secreted. In terms of biological role, hormone secreted by pancreatic cells that acts as a regulator of pancreatic and gastrointestinal functions. In Alligator mississippiensis (American alligator), this protein is Pancreatic polypeptide (ppy).